We begin with the raw amino-acid sequence, 328 residues long: dITP/XTP pyrophosphatase (328 aa).

The tract at residues 1–129 (MSEKIYEYKD…ATSEQGFGDI (129 aa)) is unknown. An NTP pyrophosphatase region spans residues 130–324 (ILIATRNEGK…KLMEVFPAWQ (195 aa)). 134-139 (TRNEGK) serves as a coordination point for substrate. The Proton acceptor role is filled by Asp-196. Residue Asp-196 coordinates Mg(2+). Substrate-binding positions include Ser-197, 280–283 (FGYD), Lys-303, and 308–309 (HR).

It belongs to the HAM1 NTPase family. As to quaternary structure, homodimer. Requires Mg(2+) as cofactor.

The catalysed reaction is XTP + H2O = XMP + diphosphate + H(+). The enzyme catalyses dITP + H2O = dIMP + diphosphate + H(+). It catalyses the reaction ITP + H2O = IMP + diphosphate + H(+). Its function is as follows. Pyrophosphatase that catalyzes the hydrolysis of nucleoside triphosphates to their monophosphate derivatives, with a high preference for the non-canonical purine nucleotides XTP (xanthosine triphosphate), dITP (deoxyinosine triphosphate) and ITP. Seems to function as a house-cleaning enzyme that removes non-canonical purine nucleotides from the nucleotide pool, thus preventing their incorporation into DNA/RNA and avoiding chromosomal lesions. In Streptococcus pyogenes serotype M3 (strain ATCC BAA-595 / MGAS315), this protein is dITP/XTP pyrophosphatase.